The sequence spans 79 residues: Darcynin (79 aa).

This sequence belongs to the darcynin family.

The chain is Darcynin from Chromobacterium violaceum (strain ATCC 12472 / DSM 30191 / JCM 1249 / CCUG 213 / NBRC 12614 / NCIMB 9131 / NCTC 9757 / MK).